The chain runs to 313 residues: MPNTAMKKKVLLMGKSGSGKTSMRSIIFANYIARDTRRLGATIDVEHSHVRFLGNLVLNLWDCGGQDTFMENYFTSQRDNIFRNVEVLIYVFDVESRELEKDMHYYQSCLEAILQNSPDAKIFCLVHKMDLVQEDQRDLIFKEREEDLRRLSRPLECACFRTSIWDETLYKAWSSIVYQLIPNVQQLEMNLRNFAQIIEADEVLLFERATFLVISHYQCKEQRDVHRFEKISNIIKQFKLSCSKLAASFQSMEVRNSNFAAFIDIFTSNTYVMVVMSDPSIPSAATLINIRNARKHFEKLERVDGPKHSLLMR.

The GTP site is built by Ser16, Gly17, Gly19, Lys20, Thr21, Ser22, Thr36, Thr42, Gly65, and His127. Positions 17, 19, 20, 21, and 22 each coordinate GDP. Residues His127 and Asp130 each coordinate GDP. Lys142 participates in a covalent cross-link: Glycyl lysine isopeptide (Lys-Gly) (interchain with G-Cter in ubiquitin). Residues Leu148 and Ile164 each contribute to the GDP site. A GTP-binding site is contributed by Ile164. Glycyl lysine isopeptide (Lys-Gly) (interchain with G-Cter in ubiquitin) cross-links involve residues Lys220, Lys230, and Lys244. Phosphoserine is present on Ser309.

The protein belongs to the GTR/RAG GTP-binding protein family. As to quaternary structure, can occur as a homodimer or as a heterodimer with RRAGC or RRAGD in a sequence-independent manner; heterodimerization stabilizes proteins of the heterodimer. The GTP-bound form of RRAGA (in complex with the GDP-bound form of RRAGC or RRAGD) interacts with RPTOR, thereby promoting recruitment of mTORC1 to the lysosomes. The Rag heterodimer interacts with SLC38A9; the probable amino acid sensor. The Rag heterodimer interacts with the Ragulator complex. The GTP-bound form of RRAGA interacts with NOL8. Component of the lysosomal folliculin complex (LFC), composed of FLCN, FNIP1 (or FNIP2), RagA/RRAGA or RagB/RRAGB GDP-bound, RagC/RRAGC or RagD/RRAGD GTP-bound, and Ragulator. Interacts with SH3BP4; the interaction with this negative regulator is most probably direct, preferentially occurs with the inactive GDP-bound form of RRAGA and is negatively regulated by amino acids. Interacts (polyubiquitinated) with TSC2. Interacts with SESN1, SESN2 and SESN3. Interacts with PIP4P1. Interacts with GPR137B. Interacts with WDR83; this interaction regulates the spatiotemporal localization of mTORC1 to the lysosomal surface. Post-translationally, polybiquitinated via 'Lys-63'-linked polyubiquitination by RNF152 in response to amino acid starvation: polyubiquitination of the GDP-bound inactive form by RNF152 promotes RRAGA inactivation and interaction with the GATOR1 complex. This does not affect RRAGA degradation.

It localises to the cytoplasm. It is found in the nucleus. The protein resides in the lysosome membrane. It catalyses the reaction GTP + H2O = GDP + phosphate + H(+). Its activity is regulated as follows. The activation of GTP-binding proteins is generally mediated by a guanine exchange factor (GEF), while inactivation through hydrolysis of bound GTP is catalyzed by a GTPase activating protein (GAP). The Ragulator complex functions as a GEF and promotes the active GTP-bound form. The GATOR1 complex functions as a GAP and stimulates RRAGA GTPase activity to turn it into its inactive GDP-bound form, preventing mTORC1 recruitment and activation. In terms of biological role, guanine nucleotide-binding protein that plays a crucial role in the cellular response to amino acid availability through regulation of the mTORC1 signaling cascade. Forms heterodimeric Rag complexes with RagC/RRAGC or RagD/RRAGD and cycles between an inactive GDP-bound and an active GTP-bound form: RagA/RRAGA is in its active form when GTP-bound RagA/RRAGA forms a complex with GDP-bound RagC/RRAGC (or RagD/RRAGD) and in an inactive form when GDP-bound RagA/RRAGA heterodimerizes with GTP-bound RagC/RRAGC (or RagD/RRAGD). In its GTP-bound active form, promotes the recruitment of mTORC1 to the lysosomes and its subsequent activation by the GTPase RHEB. Involved in the RCC1/Ran-GTPase pathway. May play a direct role in a TNF-alpha signaling pathway leading to induction of cell death. In Bos taurus (Bovine), this protein is Ras-related GTP-binding protein A.